The following is a 418-amino-acid chain: AP-3 complex subunit mu-2 (418 aa).

The MHD domain maps to Asn-176 to Arg-417.

It belongs to the adaptor complexes medium subunit family. In terms of assembly, AP-3 associates with the BLOC-1 complex. Adaptor protein complex 3 (AP-3) is a heterotetramer composed of two large adaptins (delta-type subunit AP3D1 and beta-type subunit AP3B1 or AP3B2), a medium adaptin (mu-type subunit AP3M1 or AP3M2) and a small adaptin (sigma-type subunit APS1 or AP3S2).

It localises to the golgi apparatus. The protein localises to the cytoplasmic vesicle membrane. In terms of biological role, part of the AP-3 complex, an adaptor-related complex which is not clathrin-associated. The complex is associated with the Golgi region as well as more peripheral structures. It facilitates the budding of vesicles from the Golgi membrane and may be directly involved in trafficking to lysosomes. In concert with the BLOC-1 complex, AP-3 is required to target cargos into vesicles assembled at cell bodies for delivery into neurites and nerve terminals. This is AP-3 complex subunit mu-2 (AP3M2) from Homo sapiens (Human).